The chain runs to 295 residues: Tyrosine recombinase XerC (295 aa).

One can recognise a Core-binding (CB) domain in the interval 1–84; it reads MTLEEQFLSY…SLKSFYRLLT (84 aa). Residues 105–289 enclose the Tyr recombinase domain; it reads KLPEFFYQDE…SMQHLTAEYR (185 aa). Active-site residues include arginine 145, lysine 169, histidine 241, arginine 244, and histidine 267. The active-site O-(3'-phospho-DNA)-tyrosine intermediate is tyrosine 276.

This sequence belongs to the 'phage' integrase family. XerC subfamily. In terms of assembly, forms a cyclic heterotetrameric complex composed of two molecules of XerC and two molecules of XerD.

The protein resides in the cytoplasm. In terms of biological role, site-specific tyrosine recombinase, which acts by catalyzing the cutting and rejoining of the recombining DNA molecules. The XerC-XerD complex is essential to convert dimers of the bacterial chromosome into monomers to permit their segregation at cell division. It also contributes to the segregational stability of plasmids. The sequence is that of Tyrosine recombinase XerC from Lactobacillus leichmannii.